The primary structure comprises 275 residues: DNA repair protein RecO (275 aa).

The tract at residues 1–38 is disordered; sequence MTDEADADPQPFAAPPATGAPAADKPARKPRRAAPRTS. A compositionally biased stretch (low complexity) spans 8-24; sequence DPQPFAAPPATGAPAAD.

It belongs to the RecO family.

Functionally, involved in DNA repair and RecF pathway recombination. This Burkholderia pseudomallei (strain 1710b) protein is DNA repair protein RecO.